Consider the following 192-residue polypeptide: uncharacterized protein (192 aa).

A Nudix hydrolase domain is found at 29-160 (QRQAAVLVPI…PLDIHRRGND (132 aa)). The Nudix box motif lies at 67 to 89 (GAVDNTDATLIAAALREAQEEVA). Positions 83 and 87 each coordinate Mg(2+).

This sequence belongs to the Nudix hydrolase family. PCD1 subfamily. The cofactor is Mn(2+). It depends on Mg(2+) as a cofactor.

Probably mediates the hydrolysis of some nucleoside diphosphate derivatives. This is an uncharacterized protein from Klebsiella pneumoniae subsp. pneumoniae (strain ATCC 700721 / MGH 78578).